The primary structure comprises 158 residues: MNVVQGNIEAKNAKVAIVISRFNSFLVESLLDGAIDTLKRFGQVSDDNITVVRVPGAVELPLAAKRVAASGKFDGIIALGAVIRGGTPHFEFVAGECNKGLAQVALEYDLPVSFGVLTTDTIEQAIERSGTKAGNKGGEAALSLLEMVNVLQQLEQQL.

5-amino-6-(D-ribitylamino)uracil is bound by residues phenylalanine 22, alanine 57–glutamate 59, and alanine 81–isoleucine 83. Glycine 86–threonine 87 is a binding site for (2S)-2-hydroxy-3-oxobutyl phosphate. Residue histidine 89 is the Proton donor of the active site. Phenylalanine 114 contacts 5-amino-6-(D-ribitylamino)uracil. Arginine 128 provides a ligand contact to (2S)-2-hydroxy-3-oxobutyl phosphate.

Belongs to the DMRL synthase family. In terms of assembly, forms an icosahedral capsid composed of 60 subunits, arranged as a dodecamer of pentamers.

The enzyme catalyses (2S)-2-hydroxy-3-oxobutyl phosphate + 5-amino-6-(D-ribitylamino)uracil = 6,7-dimethyl-8-(1-D-ribityl)lumazine + phosphate + 2 H2O + H(+). The protein operates within cofactor biosynthesis; riboflavin biosynthesis; riboflavin from 2-hydroxy-3-oxobutyl phosphate and 5-amino-6-(D-ribitylamino)uracil: step 1/2. Its function is as follows. Catalyzes the formation of 6,7-dimethyl-8-ribityllumazine by condensation of 5-amino-6-(D-ribitylamino)uracil with 3,4-dihydroxy-2-butanone 4-phosphate. This is the penultimate step in the biosynthesis of riboflavin. This Shewanella frigidimarina (strain NCIMB 400) protein is 6,7-dimethyl-8-ribityllumazine synthase.